Reading from the N-terminus, the 546-residue chain is Thermolysin (546 aa).

An N-terminal signal peptide occupies residues Met1 to Ala25. A propeptide spans Lys26–Val228 (activation peptide). Ca(2+) is bound by residues Asp287, Asp289, Gln291, and Asp368. Residue His372 coordinates Zn(2+). Glu373 is a catalytic residue. 2 residues coordinate Zn(2+): His376 and Glu396. Residues Glu407, Asn413, Asp415, Glu417, Glu420, Tyr423, Thr424, Ile427, and Asp430 each contribute to the Ca(2+) site. His461 serves as the catalytic Proton donor.

It belongs to the peptidase M4 family. It depends on Ca(2+) as a cofactor. The cofactor is Zn(2+).

Its subcellular location is the secreted. The enzyme catalyses Preferential cleavage: Xaa-|-Leu &gt; Xaa-|-Phe.. Functionally, extracellular zinc metalloprotease. The chain is Thermolysin from Alicyclobacillus acidocaldarius subsp. acidocaldarius (Bacillus acidocaldarius).